The sequence spans 98 residues: NADH-ubiquinone oxidoreductase chain 4L (98 aa).

A run of 3 helical transmembrane segments spans residues methionine 1 to isoleucine 21, leucine 26 to leucine 46, and isoleucine 61 to valine 81.

The protein belongs to the complex I subunit 4L family. Core subunit of respiratory chain NADH dehydrogenase (Complex I) which is composed of 45 different subunits.

The protein resides in the mitochondrion inner membrane. It carries out the reaction a ubiquinone + NADH + 5 H(+)(in) = a ubiquinol + NAD(+) + 4 H(+)(out). In terms of biological role, core subunit of the mitochondrial membrane respiratory chain NADH dehydrogenase (Complex I) which catalyzes electron transfer from NADH through the respiratory chain, using ubiquinone as an electron acceptor. Part of the enzyme membrane arm which is embedded in the lipid bilayer and involved in proton translocation. This Galago senegalensis (Northern lesser bushbaby) protein is NADH-ubiquinone oxidoreductase chain 4L (MT-ND4L).